A 229-amino-acid polypeptide reads, in one-letter code: Enolase-phosphatase E1 (229 aa).

The protein belongs to the HAD-like hydrolase superfamily. MasA/MtnC family. Monomer. Requires Mg(2+) as cofactor.

It carries out the reaction 5-methylsulfanyl-2,3-dioxopentyl phosphate + H2O = 1,2-dihydroxy-5-(methylsulfanyl)pent-1-en-3-one + phosphate. It functions in the pathway amino-acid biosynthesis; L-methionine biosynthesis via salvage pathway; L-methionine from S-methyl-5-thio-alpha-D-ribose 1-phosphate: step 3/6. The protein operates within amino-acid biosynthesis; L-methionine biosynthesis via salvage pathway; L-methionine from S-methyl-5-thio-alpha-D-ribose 1-phosphate: step 4/6. Its function is as follows. Bifunctional enzyme that catalyzes the enolization of 2,3-diketo-5-methylthiopentyl-1-phosphate (DK-MTP-1-P) into the intermediate 2-hydroxy-3-keto-5-methylthiopentenyl-1-phosphate (HK-MTPenyl-1-P), which is then dephosphorylated to form the acireductone 1,2-dihydroxy-3-keto-5-methylthiopentene (DHK-MTPene). In Erwinia tasmaniensis (strain DSM 17950 / CFBP 7177 / CIP 109463 / NCPPB 4357 / Et1/99), this protein is Enolase-phosphatase E1.